A 185-amino-acid polypeptide reads, in one-letter code: MDENKIKDAVRMIIEAIGENPEREGLAETPDRIARMYTEIFSGLKEKPEEHLKKVFTVNNDDIVLEKDIQFYSMCEHHFMPFYGKTHVAYIPNGKVVGLSKLARTVEVFAKRLQLQERMTVQIADSIMDYLKVKGVMVVIEAEHMCMTMRGIKKPGSKTVTVATRGIFKNKIEFRNQVYEMIKMK.

Zn(2+) contacts are provided by Cys-75, His-78, and Cys-146.

It belongs to the GTP cyclohydrolase I family. Homomer.

The catalysed reaction is GTP + H2O = 7,8-dihydroneopterin 3'-triphosphate + formate + H(+). It participates in cofactor biosynthesis; 7,8-dihydroneopterin triphosphate biosynthesis; 7,8-dihydroneopterin triphosphate from GTP: step 1/1. This Clostridium kluyveri (strain NBRC 12016) protein is GTP cyclohydrolase 1.